A 188-amino-acid chain; its full sequence is MAKLENPILMAKIGGAQGLRGEVRVSTYTDDPMALGDYGNLVTADGRVFEILEVREGKNVVVVRFRGINDRNAAESLNGLELFIERDNLPDDELDDDEFYYADLEGLEAVDAEGKSYGAVSAVYDFGAGDLLELKGAGRRPALIPFSEAAVLEIDLEAGRILIDPMAAGLIDNPDDKDQNGMSPFGKK.

Positions 96 to 169 constitute a PRC barrel domain; the sequence is DDEFYYADLE…RILIDPMAAG (74 aa).

The protein belongs to the RimM family. In terms of assembly, binds ribosomal protein uS19.

Its subcellular location is the cytoplasm. An accessory protein needed during the final step in the assembly of 30S ribosomal subunit, possibly for assembly of the head region. Essential for efficient processing of 16S rRNA. May be needed both before and after RbfA during the maturation of 16S rRNA. It has affinity for free ribosomal 30S subunits but not for 70S ribosomes. This Agrobacterium fabrum (strain C58 / ATCC 33970) (Agrobacterium tumefaciens (strain C58)) protein is Ribosome maturation factor RimM.